Reading from the N-terminus, the 325-residue chain is Tetraacyldisaccharide 4'-kinase (325 aa).

53–60 (SVGGNGKT) is a binding site for ATP.

It belongs to the LpxK family.

The enzyme catalyses a lipid A disaccharide + ATP = a lipid IVA + ADP + H(+). Its pathway is glycolipid biosynthesis; lipid IV(A) biosynthesis; lipid IV(A) from (3R)-3-hydroxytetradecanoyl-[acyl-carrier-protein] and UDP-N-acetyl-alpha-D-glucosamine: step 6/6. Its function is as follows. Transfers the gamma-phosphate of ATP to the 4'-position of a tetraacyldisaccharide 1-phosphate intermediate (termed DS-1-P) to form tetraacyldisaccharide 1,4'-bis-phosphate (lipid IVA). The protein is Tetraacyldisaccharide 4'-kinase of Pasteurella multocida (strain Pm70).